Here is a 218-residue protein sequence, read N- to C-terminus: Large ribosomal subunit protein bL25 (218 aa).

Disordered stretches follow at residues 1 to 20 (MKTH…GPAR) and 185 to 218 (PTAA…ASEE). The segment covering 192-218 (EEGEEGEEGEEGGEGGEAEGAEAASEE) has biased composition (acidic residues).

This sequence belongs to the bacterial ribosomal protein bL25 family. CTC subfamily. As to quaternary structure, part of the 50S ribosomal subunit; part of the 5S rRNA/L5/L18/L25 subcomplex. Contacts the 5S rRNA. Binds to the 5S rRNA independently of L5 and L18.

Functionally, this is one of the proteins that binds to the 5S RNA in the ribosome where it forms part of the central protuberance. The sequence is that of Large ribosomal subunit protein bL25 from Desulfatibacillum aliphaticivorans.